A 337-amino-acid chain; its full sequence is MRRGWKMALSGGLRCCRRVLSWVPVLVIVLVVLWSYYAYVFELCLVTVLSPAEKVIYLILYHAIFVFFAWTYWKSIFTLPQQPNQKFHLSYTDKERYKNEERPEVQKQMLVDMAKKLPVYTRTGNGAVRFCDRCHLIKPDRCHHCSVCAMCVLKMDHHCPWVNNCIGFSNYKFFLQFLAYSVLYCLYIATTVFSYFIKYWRGELPSVRSKFHVLFLLFVACMFFVSLVILFGYHCWLVSRNKTTLEAFCTPVFTSGPEKNGFNLGFIKNIQQVFGDNKKFWLIPIGSSPGDGHSFPMRSMNESQNPLLANEEPWEDNEDESQDYPEGLSSLAVESET.

The Cytoplasmic segment spans residues 1–20 (MRRGWKMALSGGLRCCRRVL). A helical membrane pass occupies residues 21 to 41 (SWVPVLVIVLVVLWSYYAYVF). The Lumenal segment spans residues 42–56 (ELCLVTVLSPAEKVI). A helical transmembrane segment spans residues 57 to 77 (YLILYHAIFVFFAWTYWKSIF). Residues 78-172 (TLPQQPNQKF…NNCIGFSNYK (95 aa)) lie on the Cytoplasmic side of the membrane. Residues 129–179 (RFCDRCHLIKPDRCHHCSVCAMCVLKMDHHCPWVNNCIGFSNYKFFLQFLA) form the DHHC domain. Residues C131, C134, H144, C145, C148, C151, and H158 each coordinate Zn(2+). C159 (S-palmitoyl cysteine intermediate) is an active-site residue. C165 contributes to the Zn(2+) binding site. A helical membrane pass occupies residues 173 to 193 (FFLQFLAYSVLYCLYIATTVF). At 194–210 (SYFIKYWRGELPSVRSK) the chain is on the lumenal side. The helical transmembrane segment at 211–234 (FHVLFLLFVACMFFVSLVILFGYH) threads the bilayer. The Cytoplasmic segment spans residues 235-337 (CWLVSRNKTT…LSSLAVESET (103 aa)). The segment at 293-337 (HSFPMRSMNESQNPLLANEEPWEDNEDESQDYPEGLSSLAVESET) is disordered. Positions 312–323 (EPWEDNEDESQD) are enriched in acidic residues.

Belongs to the DHHC palmitoyltransferase family. Post-translationally, autopalmitoylated (in vitro). In brain, expressed in both excitatory and inhibitory neurons but not expressed by glial cells.

The protein localises to the golgi apparatus membrane. It is found in the postsynaptic density. It catalyses the reaction L-cysteinyl-[protein] + hexadecanoyl-CoA = S-hexadecanoyl-L-cysteinyl-[protein] + CoA. The enzyme catalyses L-cysteinyl-[protein] + tetradecanoyl-CoA = S-tetradecanoyl-L-cysteinyl-[protein] + CoA. The catalysed reaction is L-cysteinyl-[protein] + octadecanoyl-CoA = S-octadecanoyl-L-cysteinyl-[protein] + CoA. Functionally, palmitoyltransferase that catalyzes the addition of palmitate onto various protein substrates. Has no stringent fatty acid selectivity and in addition to palmitate can also transfer onto target proteins myristate from tetradecanoyl-CoA and stearate from octadecanoyl-CoA. Palmitoylates IGF2R and SORT1, promoting their partitioning to an endosomal membrane subdomain where they can interact with the retromer cargo-selective complex. Thereby, regulates retrograde transport from endosomes to the Golgi apparatus of these lysosomal sorting receptors and plays a role in trafficking of lysosomal proteins. In the nervous system, catalyzes the palmitoylation of DLG4/PSD95 and regulates its synaptic clustering and function in synaptogenesis. Could be involved in the differentiation of dopaminergic neurons and the development of the diencephalon. Could also catalyze the palmitoylation of GAP43. Could also palmitoylate DNAJC5 and regulate its localization to the Golgi membrane. Could also palmitoylate FYN as shown in vitro. May palmitoylate CALHM3 subunit of gustatory voltage-gated ion channels and modulate channel gating and kinetics. The sequence is that of Palmitoyltransferase ZDHHC15 from Rattus norvegicus (Rat).